The following is a 247-amino-acid chain: Golgi-associated RAB2 interactor protein 5A (247 aa).

The segment covering 1-16 (MGPPLWPDLQEPPPPG) has biased composition (pro residues). 2 disordered regions span residues 1–22 (MGPPLWPDLQEPPPPGTSSQIR) and 60–92 (GDIAMRRDRGPKPALGGAGEVEPGGMAASPTGR).

It belongs to the GARIN family. Interacts (via N-terminus) with RAB2B (in GTP-bound form).

Its subcellular location is the golgi apparatus. Functionally, RAB2B effector protein which promotes cytosolic DNA-induced innate immune responses. Regulates IFN responses against DNA viruses by regulating the CGAS-STING signaling axis. This Homo sapiens (Human) protein is Golgi-associated RAB2 interactor protein 5A.